The chain runs to 247 residues: Uridylate kinase (247 aa).

K17–G20 is a binding site for ATP. UMP is bound at residue G59. Positions 60 and 64 each coordinate ATP. Residues D79 and T140–T147 each bind UMP. T167, Y173, and D176 together coordinate ATP.

It belongs to the UMP kinase family. In terms of assembly, homohexamer.

The protein resides in the cytoplasm. The enzyme catalyses UMP + ATP = UDP + ADP. It functions in the pathway pyrimidine metabolism; CTP biosynthesis via de novo pathway; UDP from UMP (UMPK route): step 1/1. Its activity is regulated as follows. Inhibited by UTP. Its function is as follows. Catalyzes the reversible phosphorylation of UMP to UDP. The protein is Uridylate kinase of Legionella pneumophila subsp. pneumophila (strain Philadelphia 1 / ATCC 33152 / DSM 7513).